A 505-amino-acid polypeptide reads, in one-letter code: Activin receptor type-1B (505 aa).

Positions 1–23 (MAESAGASSFFPLVVLLLAGSGG) are cleaved as a signal peptide. The Extracellular portion of the chain corresponds to 24-126 (SGPRGIQALL…AHPSMWGPVE (103 aa)). N-linked (GlcNAc...) asparagine glycosylation occurs at Asn43. A helical membrane pass occupies residues 127–149 (LVGIIAGPVFLLFLIIIIVFLVI). Residues 150-505 (NYHQRVYHNR…QLSVQEDVKI (356 aa)) are Cytoplasmic-facing. The GS domain maps to 177–206 (KTLQDLVYDLSTSGSGSGLPLFVQRTVART). In terms of domain architecture, Protein kinase spans 207 to 497 (IVLQEIIGKG…LRIKKTLSQL (291 aa)). ATP contacts are provided by residues 213–221 (IGKGRFGEV) and Lys234. Catalysis depends on Asp335, which acts as the Proton acceptor. Phosphotyrosine is present on Tyr380.

This sequence belongs to the protein kinase superfamily. TKL Ser/Thr protein kinase family. TGFB receptor subfamily. As to quaternary structure, forms an activin receptor complex with activin receptor type-2 (ACVR2A or ACVR2B). Part of a complex consisting of MAGI2/ARIP1, ACVR2A, ACVR1B and SMAD3. Interacts with SMAD2 and SMAD3. Interacts with SMAD7. Interacts with FKBP1A. Interacts with IGSF1. Interacts with CRIPTO. Interacts with TDP2. Interacts with TSC22D1/TSC-22. Autophosphorylated. Phosphorylated by activin receptor type-2 (ACVR2A or ACVR2B) in response to activin-binding at serine and threonine residues in the GS domain. Phosphorylation of ACVR1B by activin receptor type-2 regulates association with SMAD7. In terms of processing, ubiquitinated. Level of ubiquitination is regulated by the SMAD7-SMURF1 complex. Post-translationally, ubiquitinated.

The protein localises to the cell membrane. It catalyses the reaction L-threonyl-[receptor-protein] + ATP = O-phospho-L-threonyl-[receptor-protein] + ADP + H(+). It carries out the reaction L-seryl-[receptor-protein] + ATP = O-phospho-L-seryl-[receptor-protein] + ADP + H(+). Its activity is regulated as follows. Activin receptor type-2 (ACVR2A or ACVR2B) activates the type-1 receptor through phosphorylation of its regulatory GS domain. In terms of biological role, transmembrane serine/threonine kinase activin type-1 receptor forming an activin receptor complex with activin receptor type-2 (ACVR2A or ACVR2B). Transduces the activin signal from the cell surface to the cytoplasm and is thus regulating a many physiological and pathological processes including neuronal differentiation and neuronal survival, hair follicle development and cycling, FSH production by the pituitary gland, wound healing, extracellular matrix production, immunosuppression and carcinogenesis. Activin is also thought to have a paracrine or autocrine role in follicular development in the ovary. Within the receptor complex, type-2 receptors (ACVR2A and/or ACVR2B) act as a primary activin receptors whereas the type-1 receptors like ACVR1B act as downstream transducers of activin signals. Activin binds to type-2 receptor at the plasma membrane and activates its serine-threonine kinase. The activated receptor type-2 then phosphorylates and activates the type-1 receptor such as ACVR1B. Once activated, the type-1 receptor binds and phosphorylates the SMAD proteins SMAD2 and SMAD3, on serine residues of the C-terminal tail. Soon after their association with the activin receptor and subsequent phosphorylation, SMAD2 and SMAD3 are released into the cytoplasm where they interact with the common partner SMAD4. This SMAD complex translocates into the nucleus where it mediates activin-induced transcription. Inhibitory SMAD7, which is recruited to ACVR1B through FKBP1A, can prevent the association of SMAD2 and SMAD3 with the activin receptor complex, thereby blocking the activin signal. Activin signal transduction is also antagonized by the binding to the receptor of inhibin-B via the IGSF1 inhibin coreceptor. ACVR1B also phosphorylates TDP2. The polypeptide is Activin receptor type-1B (Acvr1b) (Mus musculus (Mouse)).